Reading from the N-terminus, the 236-residue chain is Ubiquinone biosynthesis O-methyltransferase (236 aa).

S-adenosyl-L-methionine contacts are provided by Arg-39, Gly-59, Asp-80, and Met-124.

This sequence belongs to the methyltransferase superfamily. UbiG/COQ3 family.

It catalyses the reaction a 3-demethylubiquinol + S-adenosyl-L-methionine = a ubiquinol + S-adenosyl-L-homocysteine + H(+). The enzyme catalyses a 3-(all-trans-polyprenyl)benzene-1,2-diol + S-adenosyl-L-methionine = a 2-methoxy-6-(all-trans-polyprenyl)phenol + S-adenosyl-L-homocysteine + H(+). Its pathway is cofactor biosynthesis; ubiquinone biosynthesis. Functionally, O-methyltransferase that catalyzes the 2 O-methylation steps in the ubiquinone biosynthetic pathway. This is Ubiquinone biosynthesis O-methyltransferase from Shewanella sp. (strain MR-7).